The sequence spans 639 residues: MAU2 chromatid cohesion factor homolog (639 aa).

TPR repeat units lie at residues 453–486 (GGFY…ANAE) and 493–526 (SCSL…ASKI).

This sequence belongs to the SCC4/mau-2 family. Interacts with Nipped-B to form the cohesin loading complex.

Its subcellular location is the nucleus. The protein localises to the nucleoplasm. Its function is as follows. Required for association of the cohesin complex with chromatin during interphase. Plays a role in sister chromatid cohesion and normal progression through prometaphase. The chain is MAU2 chromatid cohesion factor homolog from Drosophila ananassae (Fruit fly).